Reading from the N-terminus, the 418-residue chain is LL-diaminopimelate aminotransferase (418 aa).

Residues tyrosine 25 and glycine 52 each coordinate substrate. Residues tyrosine 78, 115-116 (SK), tyrosine 140, asparagine 190, tyrosine 221, and 248-250 (SFS) each bind pyridoxal 5'-phosphate. Substrate-binding residues include lysine 116, tyrosine 140, and asparagine 190. Residue lysine 251 is modified to N6-(pyridoxal phosphate)lysine. Pyridoxal 5'-phosphate is bound at residue arginine 259.

It belongs to the class-I pyridoxal-phosphate-dependent aminotransferase family. In terms of assembly, homodimer. It depends on pyridoxal 5'-phosphate as a cofactor.

It is found in the cytoplasm. It carries out the reaction (2S,6S)-2,6-diaminopimelate + 2-oxoglutarate = (S)-2,3,4,5-tetrahydrodipicolinate + L-glutamate + H2O + H(+). It functions in the pathway amino-acid biosynthesis; L-lysine biosynthesis via DAP pathway; LL-2,6-diaminopimelate from (S)-tetrahydrodipicolinate (aminotransferase route): step 1/1. In terms of biological role, involved in the synthesis of meso-diaminopimelate (m-DAP or DL-DAP), required for both lysine and peptidoglycan biosynthesis. Catalyzes the direct conversion of tetrahydrodipicolinate to LL-diaminopimelate, a reaction that requires three enzymes in E.coli. This Methanocaldococcus jannaschii (strain ATCC 43067 / DSM 2661 / JAL-1 / JCM 10045 / NBRC 100440) (Methanococcus jannaschii) protein is LL-diaminopimelate aminotransferase (dapL).